A 376-amino-acid chain; its full sequence is Chaperone protein DnaJ (376 aa).

One can recognise a J domain in the interval 5–70; the sequence is DYYEILGVSK…QKRAAYDQYG (66 aa). A CR-type zinc finger spans residues 131–209; the sequence is GVTKEIRIPT…CHGHGRVERS (79 aa). Zn(2+)-binding residues include Cys-144, Cys-147, Cys-161, Cys-164, Cys-183, Cys-186, Cys-197, and Cys-200. 4 CXXCXGXG motif repeats span residues 144-151, 161-168, 183-190, and 197-204; these read CDVCHGSG, CPTCHGSG, CPHCQGRG, and CNKCHGHG.

Belongs to the DnaJ family. In terms of assembly, homodimer. Zn(2+) is required as a cofactor.

The protein resides in the cytoplasm. Functionally, participates actively in the response to hyperosmotic and heat shock by preventing the aggregation of stress-denatured proteins and by disaggregating proteins, also in an autonomous, DnaK-independent fashion. Unfolded proteins bind initially to DnaJ; upon interaction with the DnaJ-bound protein, DnaK hydrolyzes its bound ATP, resulting in the formation of a stable complex. GrpE releases ADP from DnaK; ATP binding to DnaK triggers the release of the substrate protein, thus completing the reaction cycle. Several rounds of ATP-dependent interactions between DnaJ, DnaK and GrpE are required for fully efficient folding. Also involved, together with DnaK and GrpE, in the DNA replication of plasmids through activation of initiation proteins. In Escherichia coli (strain K12 / DH10B), this protein is Chaperone protein DnaJ.